The following is a 364-amino-acid chain: Fructose-bisphosphate aldolase A (364 aa).

Tyrosine 5 carries the post-translational modification Phosphotyrosine. Position 9 is a phosphothreonine (threonine 9). 2 positions are modified to phosphoserine: serine 36 and serine 39. At lysine 42 the chain carries N6-acetyllysine; alternate. A Glycyl lysine isopeptide (Lys-Gly) (interchain with G-Cter in SUMO1); alternate cross-link involves residue lysine 42. Lysine 42 is covalently cross-linked (Glycyl lysine isopeptide (Lys-Gly) (interchain with G-Cter in SUMO2); alternate). Arginine 43 contacts beta-D-fructose 1,6-bisphosphate. Serine 46 is subject to Phosphoserine. The residue at position 99 (lysine 99) is an N6-(2-hydroxyisobutyryl)lysine. Lysine 108 bears the N6-acetyllysine mark. N6-acetyllysine; alternate is present on lysine 111. Lysine 111 carries the post-translational modification N6-malonyllysine; alternate. Serine 132 is subject to Phosphoserine. The residue at position 147 (lysine 147) is an N6-(2-hydroxyisobutyryl)lysine. Glutamate 188 acts as the Proton acceptor in catalysis. Lysine 230 functions as the Schiff-base intermediate with dihydroxyacetone-P in the catalytic mechanism. A Phosphoserine modification is found at serine 272. Beta-D-fructose 1,6-bisphosphate is bound by residues serine 272 to glycine 274, serine 301, and arginine 304. Lysine 312 carries the N6-malonyllysine modification. Lysine 330 is subject to N6-acetyllysine.

It belongs to the class I fructose-bisphosphate aldolase family. In terms of assembly, homotetramer. Interacts with SNX9 and WAS. Interacts with FBP2; the interaction blocks FBP2 inhibition by physiological concentrations of AMP and reduces inhibition by Ca(2+).

The protein resides in the cytoplasm. The protein localises to the myofibril. It is found in the sarcomere. Its subcellular location is the i band. It localises to the m line. It catalyses the reaction beta-D-fructose 1,6-bisphosphate = D-glyceraldehyde 3-phosphate + dihydroxyacetone phosphate. It functions in the pathway carbohydrate degradation; glycolysis; D-glyceraldehyde 3-phosphate and glycerone phosphate from D-glucose: step 4/4. In terms of biological role, catalyzes the reversible conversion of beta-D-fructose 1,6-bisphosphate (FBP) into two triose phosphate and plays a key role in glycolysis and gluconeogenesis. In addition, may also function as scaffolding protein. The sequence is that of Fructose-bisphosphate aldolase A from Homo sapiens (Human).